The primary structure comprises 171 residues: Ribosome-binding factor A (171 aa).

Residues 126–138 are compositionally biased toward basic and acidic residues; it reads VREGAKHAGDADP. The segment at 126–171 is disordered; that stretch reads VREGAKHAGDADPYRVSGVEEEAGGSGEVQAEFDAEDTGDRNRQDD.

Belongs to the RbfA family. As to quaternary structure, monomer. Binds 30S ribosomal subunits, but not 50S ribosomal subunits or 70S ribosomes.

The protein localises to the cytoplasm. In terms of biological role, one of several proteins that assist in the late maturation steps of the functional core of the 30S ribosomal subunit. Associates with free 30S ribosomal subunits (but not with 30S subunits that are part of 70S ribosomes or polysomes). Required for efficient processing of 16S rRNA. May interact with the 5'-terminal helix region of 16S rRNA. The polypeptide is Ribosome-binding factor A (Mycobacterium sp. (strain JLS)).